An 873-amino-acid polypeptide reads, in one-letter code: Tyrosine-protein kinase receptor TYRO3 (873 aa).

The first 28 residues, 1–28, serve as a signal peptide directing secretion; that stretch reads MELRRSMALPRLLLLGLWAAALRDGAVA. Ig-like C2-type domains lie at 29-116 and 127-208; these read AGMK…KEES and PYFT…ATVQ. Topologically, residues 29–416 are extracellular; sequence AGMKFTGSPI…QRQPPYGTSW (388 aa). Residue Asn51 is glycosylated (N-linked (GlcNAc...) asparagine). Disulfide bonds link Cys52–Cys105 and Cys148–Cys191. N-linked (GlcNAc...) asparagine glycosylation is found at Asn179, Asn184, Asn218, Asn228, Asn281, Asn353, and Asn367. 2 Fibronectin type-III domains span residues 215–308 and 310–403; these read PPLN…TLEL and PSST…AQEV. The chain crosses the membrane as a helical span at residues 417–437; sequence VPVALGILTALVTAVALALIL. Over 438–873 the chain is Cytoplasmic; sequence LRKRRKETRF…ELETEGEKSC (436 aa). The Protein kinase domain occupies 505 to 776; the sequence is FTLGRMLGKG…GVLRSQLEMI (272 aa). ATP contacts are provided by residues 511 to 519 and Lys537; that span reads LGKGEFGSV. Asp642 functions as the Proton acceptor in the catalytic mechanism. At Tyr673 the chain carries Phosphotyrosine; by autocatalysis. The segment at 845–873 is disordered; sequence VEGERHPEGQEGENKSLLYELETEGEKSC. Positions 847–858 are enriched in basic and acidic residues; the sequence is GERHPEGQEGEN.

It belongs to the protein kinase superfamily. Tyr protein kinase family. AXL/UFO subfamily. Post-translationally, autophosphorylated on tyrosine residues. As to expression, detected in embryonic retina (at protein level). detected in brain, retina, kidney and in retinal Mueller glia-like cells.

It is found in the cell membrane. The enzyme catalyses L-tyrosyl-[protein] + ATP = O-phospho-L-tyrosyl-[protein] + ADP + H(+). In terms of biological role, receptor tyrosine kinase that transduces signals from the extracellular matrix into the cytoplasm by binding to several ligands. Regulates many physiological processes including cell survival, migration and differentiation. Ligand binding at the cell surface induces dimerization and autophosphorylation of TYRO3 on its intracellular domain that provides docking sites for downstream signaling molecules. Following activation by ligand, enhances PI3-kinase activity and activates the AKT survival pathway, including nuclear translocation of NF-kappa-B and up-regulation of transcription of NF-kappa-B-regulated genes. The chain is Tyrosine-protein kinase receptor TYRO3 (TYRO3) from Gallus gallus (Chicken).